The chain runs to 556 residues: Formate--tetrahydrofolate ligase 1 (556 aa).

An ATP-binding site is contributed by 65-72 (TPAGEGKT).

Belongs to the formate--tetrahydrofolate ligase family.

It catalyses the reaction (6S)-5,6,7,8-tetrahydrofolate + formate + ATP = (6R)-10-formyltetrahydrofolate + ADP + phosphate. The protein operates within one-carbon metabolism; tetrahydrofolate interconversion. In Desulfitobacterium hafniense (strain Y51), this protein is Formate--tetrahydrofolate ligase 1.